A 367-amino-acid polypeptide reads, in one-letter code: MKTSPHRNTSAIVDLKAIRNNIEKFKKHINPNAEIWPAVKADAYGHGSIEVSKAVSDLVGGFCVSNLDEAIELRNHLVTKPILVLSGIVPEDVDIAAALNISLTAPSLEWLKLVVQEEAELSDLKIHIGVDSGMGRIGIRDVEEANQMIELADKYAINFEGIFTHFATADMADETKFKNQQARFNKIMAGLSRQPKFIHSTNTAAALWHKEQVQAIERLGISMYGLNPSGKTLELPFEIEPALSLVSELTHIKKIAAGETVGYGATYETSEETWIGTVPIGYADGWTRQMQGFKVLVDGKFCEIVGRVCMDQMMIKLDKSYPLGTKVTLIGRDKANEITTTDVADWRGTINYEVLCLLSDRIKRIYK.

K40 functions as the Proton acceptor; specific for D-alanine in the catalytic mechanism. K40 is subject to N6-(pyridoxal phosphate)lysine. R136 is a binding site for substrate. Catalysis depends on Y263, which acts as the Proton acceptor; specific for L-alanine. M310 provides a ligand contact to substrate.

Belongs to the alanine racemase family. The cofactor is pyridoxal 5'-phosphate.

The enzyme catalyses L-alanine = D-alanine. Its pathway is amino-acid biosynthesis; D-alanine biosynthesis; D-alanine from L-alanine: step 1/1. Its function is as follows. Catalyzes the interconversion of L-alanine and D-alanine. May also act on other amino acids. This chain is Alanine racemase (alr), found in Lactococcus lactis subsp. cremoris (strain MG1363).